Consider the following 395-residue polypeptide: Elongation factor Tu (395 aa).

One can recognise a tr-type G domain in the interval Lys10–Glu204. The tract at residues Gly19–Thr26 is G1. Position 19 to 26 (Gly19 to Thr26) interacts with GTP. Thr26 is a binding site for Mg(2+). The G2 stretch occupies residues Gly60–Ser64. The interval Asp81 to Gly84 is G3. GTP-binding positions include Asp81–His85 and Asn136–Asp139. A G4 region spans residues Asn136 to Asp139. A G5 region spans residues Ser174–Leu176.

It belongs to the TRAFAC class translation factor GTPase superfamily. Classic translation factor GTPase family. EF-Tu/EF-1A subfamily. As to quaternary structure, monomer.

It is found in the cytoplasm. The catalysed reaction is GTP + H2O = GDP + phosphate + H(+). Its function is as follows. GTP hydrolase that promotes the GTP-dependent binding of aminoacyl-tRNA to the A-site of ribosomes during protein biosynthesis. The chain is Elongation factor Tu from Bacillus cereus (strain G9842).